The chain runs to 213 residues: Phosphatidylcholine transfer protein (213 aa).

Met-1 is modified (N-acetylmethionine). An START domain is found at 1 to 212; it reads MDPGAGAFSE…MVKACQNYKK (212 aa). A 1,2-diacyl-sn-glycero-3-phosphocholine-binding residues include Tyr-72 and Arg-78. Ser-139 is modified (phosphoserine). Gln-157 provides a ligand contact to a 1,2-diacyl-sn-glycero-3-phosphocholine. Positions 171-176 are part of the binding site for phosphatidylcholine; it reads VFMYYF.

As to quaternary structure, interacts with ACOT13/THEM2.

The protein localises to the cytoplasm. Its function is as follows. Catalyzes the transfer of phosphatidylcholine between membranes. Binds phosphatidylcholine in a tight 1:1 stoichiometric complex. This Bos taurus (Bovine) protein is Phosphatidylcholine transfer protein (PCTP).